The chain runs to 205 residues: MAAAAGGAASRRGAGRPCPFSIEHILSSLPERSLPARAACPPQPAGRQSPAKPEEPGAPEAAPCACCCCCGPRAAPCGPPEAAAGLGARLAWPLRLGPAVPLSLGAPAGGSGALPGAVGPGSQRRTRRHRTIFSEEQLQALEALFVQNQYPDVSTRERLAGRIRLREERVEVWFKNRRAKWRHQKRASASARLLPGVKKSPKGSC.

2 disordered regions span residues 33 to 58 (SLPA…EPGA) and 185 to 205 (KRAS…KGSC). Positions 126–185 (TRRHRTIFSEEQLQALEALFVQNQYPDVSTRERLAGRIRLREERVEVWFKNRRAKWRHQK) form a DNA-binding region, homeobox.

This sequence belongs to the paired homeobox family. Bicoid subfamily. In terms of tissue distribution, detected in adult testis and pituitary, and in 9-10 week fetal tissue (thorax). Probably expressed in other tissues at low levels.

It is found in the nucleus. May have a role in development. May regulate its own transcription. May bind the bicoid consensus sequence TAATCC. The protein is Homeobox protein goosecoid-2 (GSC2) of Homo sapiens (Human).